The following is a 207-amino-acid chain: FMN-dependent NADH:quinone oxidoreductase (207 aa).

Position 10 (Ser-10) interacts with FMN.

This sequence belongs to the azoreductase type 1 family. Homodimer. FMN serves as cofactor.

It catalyses the reaction 2 a quinone + NADH + H(+) = 2 a 1,4-benzosemiquinone + NAD(+). The catalysed reaction is N,N-dimethyl-1,4-phenylenediamine + anthranilate + 2 NAD(+) = 2-(4-dimethylaminophenyl)diazenylbenzoate + 2 NADH + 2 H(+). Functionally, quinone reductase that provides resistance to thiol-specific stress caused by electrophilic quinones. Its function is as follows. Also exhibits azoreductase activity. Catalyzes the reductive cleavage of the azo bond in aromatic azo compounds to the corresponding amines. The sequence is that of FMN-dependent NADH:quinone oxidoreductase from Shouchella clausii (strain KSM-K16) (Alkalihalobacillus clausii).